The sequence spans 61 residues: Photosystem II reaction center protein K (61 aa).

The propeptide occupies 1–24; it reads MPNILSLTCICFNSVIYPTSFFFA. A helical membrane pass occupies residues 32–52; sequence IFNPIVDFMPVIPVLFFLLAF.

The protein belongs to the PsbK family. PSII is composed of 1 copy each of membrane proteins PsbA, PsbB, PsbC, PsbD, PsbE, PsbF, PsbH, PsbI, PsbJ, PsbK, PsbL, PsbM, PsbT, PsbX, PsbY, PsbZ, Psb30/Ycf12, at least 3 peripheral proteins of the oxygen-evolving complex and a large number of cofactors. It forms dimeric complexes.

It is found in the plastid. It localises to the chloroplast thylakoid membrane. Functionally, one of the components of the core complex of photosystem II (PSII). PSII is a light-driven water:plastoquinone oxidoreductase that uses light energy to abstract electrons from H(2)O, generating O(2) and a proton gradient subsequently used for ATP formation. It consists of a core antenna complex that captures photons, and an electron transfer chain that converts photonic excitation into a charge separation. The polypeptide is Photosystem II reaction center protein K (Oryza nivara (Indian wild rice)).